We begin with the raw amino-acid sequence, 428 residues long: Enolase (428 aa).

A (2R)-2-phosphoglycerate-binding site is contributed by Gln-162. Glu-204 serves as the catalytic Proton donor. The Mg(2+) site is built by Asp-241, Glu-283, and Asp-310. 4 residues coordinate (2R)-2-phosphoglycerate: Lys-335, Arg-364, Ser-365, and Lys-386. Catalysis depends on Lys-335, which acts as the Proton acceptor.

This sequence belongs to the enolase family. The cofactor is Mg(2+).

It is found in the cytoplasm. It localises to the secreted. The protein resides in the cell surface. The enzyme catalyses (2R)-2-phosphoglycerate = phosphoenolpyruvate + H2O. Its pathway is carbohydrate degradation; glycolysis; pyruvate from D-glyceraldehyde 3-phosphate: step 4/5. Catalyzes the reversible conversion of 2-phosphoglycerate (2-PG) into phosphoenolpyruvate (PEP). It is essential for the degradation of carbohydrates via glycolysis. The sequence is that of Enolase from Rhodococcus jostii (strain RHA1).